Reading from the N-terminus, the 247-residue chain is Lys-63-specific deubiquitinase BRCC36 (247 aa).

An N-acetylalanine modification is found at Ala-2. Positions 12 to 179 constitute an MPN domain; the sequence is VHLESDAFLV…YTCFQSIQAQ (168 aa). Residues His-122, His-124, and Asp-135 each contribute to the Zn(2+) site. The short motif at 122–135 is the JAMM motif element; it reads HSHPHITVWPSHVD. The residue at position 189 (Ser-189) is a Phosphoserine.

Belongs to the peptidase M67A family. BRCC36 subfamily. Component of the ARISC complex, at least composed of UIMC1/RAP80, ABRAXAS1, BRCC3/BRCC36, BABAM2 and BABAM1/NBA1. Component of the BRCA1-A complex, at least composed of BRCA1, BARD1, UIMC1/RAP80, ABRAXAS1, BRCC3/BRCC36, BABAM2 and BABAM1/NBA1. In the BRCA1-A complex, interacts directly with ABRAXAS1 and BABAM2. Component of the BRISC complex, at least composed of ABRAXAS2, BRCC3/BRCC36, BABAM2 and BABAM1/NBA1. Identified in a complex with SHMT2 and the other subunits of the BRISC complex. In the BRISC complex, interacts directly with ABRAXAS2. Identified in a complex with ABRAXAS2 and NUMA1. The BRISC complex interacts with the CSN complex. Component of the BRCA1/BRCA2 containing complex (BRCC), which also contains BRCA1, BRCA2, BARD1, BABAM2 and RAD51. BRCC is a ubiquitin E3 ligase complex that enhances cellular survival following DNA damage. Interacts with BRCA1. Binds polyubiquitin. Interacts with PWWP2B. Interacts with HDAC1; this interaction is enhanced in the presence of PWWP2B. Requires Zn(2+) as cofactor.

Its subcellular location is the nucleus. It localises to the cytoplasm. It is found in the cytoskeleton. The protein resides in the spindle pole. In terms of biological role, metalloprotease that specifically cleaves 'Lys-63'-linked polyubiquitin chains. Does not have activity toward 'Lys-48'-linked polyubiquitin chains. Component of the BRCA1-A complex, a complex that specifically recognizes 'Lys-63'-linked ubiquitinated histones H2A and H2AX at DNA lesions sites, leading to target the BRCA1-BARD1 heterodimer to sites of DNA damage at double-strand breaks (DSBs). In the BRCA1-A complex, it specifically removes 'Lys-63'-linked ubiquitin on histones H2A and H2AX, antagonizing the RNF8-dependent ubiquitination at double-strand breaks (DSBs). Catalytic subunit of the BRISC complex, a multiprotein complex that specifically cleaves 'Lys-63'-linked ubiquitin in various substrates. Mediates the specific 'Lys-63'-specific deubiquitination associated with the COP9 signalosome complex (CSN), via the interaction of the BRISC complex with the CSN complex. The BRISC complex is required for normal mitotic spindle assembly and microtubule attachment to kinetochores via its role in deubiquitinating NUMA1. Plays a role in interferon signaling via its role in the deubiquitination of the interferon receptor IFNAR1; deubiquitination increases IFNAR1 activity by enhancing its stability and cell surface expression. Acts as a regulator of the NLRP3 inflammasome by mediating deubiquitination of NLRP3, leading to NLRP3 inflammasome assembly. Down-regulates the response to bacterial lipopolysaccharide (LPS) via its role in IFNAR1 deubiquitination. Deubiquitinates HDAC1 and PWWP2B leading to their stabilization. This Pongo abelii (Sumatran orangutan) protein is Lys-63-specific deubiquitinase BRCC36 (BRCC3).